Reading from the N-terminus, the 534-residue chain is Light-independent protochlorophyllide reductase subunit B (534 aa).

Asp-36 lines the [4Fe-4S] cluster pocket. Asp-274 functions as the Proton donor in the catalytic mechanism. 409–410 (GL) provides a ligand contact to substrate. Residues 426–446 (DEAGPSHHGGKAVPASAPRAD) form a disordered region.

It belongs to the ChlB/BchB/BchZ family. In terms of assembly, protochlorophyllide reductase is composed of three subunits; BchL, BchN and BchB. Forms a heterotetramer of two BchB and two BchN subunits. [4Fe-4S] cluster serves as cofactor.

It catalyses the reaction chlorophyllide a + oxidized 2[4Fe-4S]-[ferredoxin] + 2 ADP + 2 phosphate = protochlorophyllide a + reduced 2[4Fe-4S]-[ferredoxin] + 2 ATP + 2 H2O. It participates in porphyrin-containing compound metabolism; bacteriochlorophyll biosynthesis (light-independent). In terms of biological role, component of the dark-operative protochlorophyllide reductase (DPOR) that uses Mg-ATP and reduced ferredoxin to reduce ring D of protochlorophyllide (Pchlide) to form chlorophyllide a (Chlide). This reaction is light-independent. The NB-protein (BchN-BchB) is the catalytic component of the complex. This chain is Light-independent protochlorophyllide reductase subunit B, found in Cereibacter sphaeroides (strain ATCC 17023 / DSM 158 / JCM 6121 / CCUG 31486 / LMG 2827 / NBRC 12203 / NCIMB 8253 / ATH 2.4.1.) (Rhodobacter sphaeroides).